The following is a 967-amino-acid chain: Phosphatidylserine decarboxylase proenzyme 3 (967 aa).

Residues 217 to 255 (FIAEPDSSIPPSESSVSISTDTGKETPPSKSKKSSNQPY) are disordered. Residues 220-237 (EPDSSIPPSESSVSISTD) show a composition bias toward low complexity. In terms of domain architecture, C2 spans 250–373 (SSNQPYVSIG…SSAQVDPETG (124 aa)). The Ca(2+) site is built by D343, S346, and D349. Over residues 532–544 (DQQATQTPQSPSS) the composition is skewed to low complexity. The interval 532–566 (DQQATQTPQSPSSNEESGPGTPTQTSDQYEDSEDS) is disordered. The segment covering 545–558 (NEESGPGTPTQTSD) has biased composition (polar residues). Residues D769, H825, and S912 each act as charge relay system; for autoendoproteolytic cleavage activity in the active site. S912 (schiff-base intermediate with substrate; via pyruvic acid; for decarboxylase activity) is an active-site residue. S912 carries the post-translational modification Pyruvic acid (Ser); by autocatalysis. Positions 947–967 (IGQKIDPNKPTDAEDHSKSDS) are disordered.

The protein belongs to the phosphatidylserine decarboxylase family. PSD-B subfamily. Eukaryotic type II sub-subfamily. Heterodimer of a large membrane-associated beta subunit and a small pyruvoyl-containing alpha subunit. Pyruvate serves as cofactor. Ca(2+) is required as a cofactor. In terms of processing, is synthesized initially as an inactive proenzyme. Formation of the active enzyme involves a self-maturation process in which the active site pyruvoyl group is generated from an internal serine residue via an autocatalytic post-translational modification. Two non-identical subunits are generated from the proenzyme in this reaction, and the pyruvate is formed at the N-terminus of the alpha chain, which is derived from the carboxyl end of the proenzyme. The autoendoproteolytic cleavage occurs by a canonical serine protease mechanism, in which the side chain hydroxyl group of the serine supplies its oxygen atom to form the C-terminus of the beta chain, while the remainder of the serine residue undergoes an oxidative deamination to produce ammonia and the pyruvoyl prosthetic group on the alpha chain. During this reaction, the Ser that is part of the protease active site of the proenzyme becomes the pyruvoyl prosthetic group, which constitutes an essential element of the active site of the mature decarboxylase.

It is found in the golgi apparatus membrane. The protein localises to the endosome membrane. It localises to the cytoplasm. The catalysed reaction is a 1,2-diacyl-sn-glycero-3-phospho-L-serine + H(+) = a 1,2-diacyl-sn-glycero-3-phosphoethanolamine + CO2. Its pathway is phospholipid metabolism; phosphatidylethanolamine biosynthesis; phosphatidylethanolamine from CDP-diacylglycerol: step 2/2. Its function is as follows. Catalyzes the formation of phosphatidylethanolamine (PtdEtn) from phosphatidylserine (PtdSer). Plays a central role in phospholipid metabolism and in the interorganelle trafficking of phosphatidylserine. Together with psd1 and psd2, responsible for the majority of phosphatidylethanolamine synthesis. This Schizosaccharomyces pombe (strain 972 / ATCC 24843) (Fission yeast) protein is Phosphatidylserine decarboxylase proenzyme 3.